Reading from the N-terminus, the 167-residue chain is Small ribosomal subunit protein uS5 (167 aa).

In terms of domain architecture, S5 DRBM spans 12–75 (LQEKLIAVNR…EKARRNMVTV (64 aa)).

Belongs to the universal ribosomal protein uS5 family. In terms of assembly, part of the 30S ribosomal subunit. Contacts proteins S4 and S8.

In terms of biological role, with S4 and S12 plays an important role in translational accuracy. Functionally, located at the back of the 30S subunit body where it stabilizes the conformation of the head with respect to the body. The chain is Small ribosomal subunit protein uS5 from Shewanella denitrificans (strain OS217 / ATCC BAA-1090 / DSM 15013).